The following is a 353-amino-acid chain: Photosystem II D2 protein (353 aa).

Thr-2 carries the post-translational modification N-acetylthreonine. At Thr-2 the chain carries Phosphothreonine. Residues 41 to 61 form a helical membrane-spanning segment; that stretch reads CAYFALGGWFTGTTFVTSWYT. His-118 is a chlorophyll a binding site. A helical transmembrane segment spans residues 125–141; the sequence is GFMLRQFELARSVQLRP. Residues Gln-130 and Asn-143 each contribute to the pheophytin a site. Residues 153–166 traverse the membrane as a helical segment; sequence VFVSVFLIYPLGQS. A chlorophyll a-binding site is contributed by His-198. A helical transmembrane segment spans residues 208–228; the sequence is AALLCAIHGATVENTLFEDGD. 2 residues coordinate a plastoquinone: His-215 and Phe-262. His-215 provides a ligand contact to Fe cation. His-269 contacts Fe cation. The chain crosses the membrane as a helical span at residues 279–295; sequence GLWMSALGVVGLALNLR.

The protein belongs to the reaction center PufL/M/PsbA/D family. As to quaternary structure, PSII is composed of 1 copy each of membrane proteins PsbA, PsbB, PsbC, PsbD, PsbE, PsbF, PsbH, PsbI, PsbJ, PsbK, PsbL, PsbM, PsbT, PsbX, PsbY, PsbZ, Psb30/Ycf12, at least 3 peripheral proteins of the oxygen-evolving complex and a large number of cofactors. It forms dimeric complexes. Requires The D1/D2 heterodimer binds P680, chlorophylls that are the primary electron donor of PSII, and subsequent electron acceptors. It shares a non-heme iron and each subunit binds pheophytin, quinone, additional chlorophylls, carotenoids and lipids. There is also a Cl(-1) ion associated with D1 and D2, which is required for oxygen evolution. The PSII complex binds additional chlorophylls, carotenoids and specific lipids. as cofactor.

Its subcellular location is the plastid. The protein resides in the chloroplast thylakoid membrane. It carries out the reaction 2 a plastoquinone + 4 hnu + 2 H2O = 2 a plastoquinol + O2. Its function is as follows. Photosystem II (PSII) is a light-driven water:plastoquinone oxidoreductase that uses light energy to abstract electrons from H(2)O, generating O(2) and a proton gradient subsequently used for ATP formation. It consists of a core antenna complex that captures photons, and an electron transfer chain that converts photonic excitation into a charge separation. The D1/D2 (PsbA/PsbD) reaction center heterodimer binds P680, the primary electron donor of PSII as well as several subsequent electron acceptors. D2 is needed for assembly of a stable PSII complex. In Nandina domestica (Heavenly bamboo), this protein is Photosystem II D2 protein.